A 188-amino-acid polypeptide reads, in one-letter code: UPF0314 protein Sala_3154 (188 aa).

The next 3 membrane-spanning stretches (helical) occupy residues 8-28, 57-77, and 143-163; these read TGWL…IFMG, WYSF…RWIM, and MRWW…LWTI.

The protein belongs to the UPF0314 family.

It is found in the cell membrane. The protein is UPF0314 protein Sala_3154 of Sphingopyxis alaskensis (strain DSM 13593 / LMG 18877 / RB2256) (Sphingomonas alaskensis).